The following is a 152-amino-acid chain: Putative pre-16S rRNA nuclease (152 aa).

This sequence belongs to the YqgF nuclease family.

Its subcellular location is the cytoplasm. Functionally, could be a nuclease involved in processing of the 5'-end of pre-16S rRNA. This Synechocystis sp. (strain ATCC 27184 / PCC 6803 / Kazusa) protein is Putative pre-16S rRNA nuclease.